The chain runs to 365 residues: NADH-quinone oxidoreductase subunit H 2 (365 aa).

The next 8 membrane-spanning stretches (helical) occupy residues 1–21 (MFVV…VVWA), 71–91 (LAPV…PFAP), 100–120 (VGVF…FLAG), 136–156 (IAQV…VVLI), 199–219 (FVSW…VFFI), 254–274 (ILFL…VVLF), 301–321 (IAGY…VVFL), and 342–362 (WKIL…WVVW).

This sequence belongs to the complex I subunit 1 family. In terms of assembly, NDH-1 is composed of 14 different subunits. Subunits NuoA, H, J, K, L, M, N constitute the membrane sector of the complex.

The protein localises to the cell inner membrane. It carries out the reaction a quinone + NADH + 5 H(+)(in) = a quinol + NAD(+) + 4 H(+)(out). Functionally, NDH-1 shuttles electrons from NADH, via FMN and iron-sulfur (Fe-S) centers, to quinones in the respiratory chain. The immediate electron acceptor for the enzyme in this species is believed to be ubiquinone. Couples the redox reaction to proton translocation (for every two electrons transferred, four hydrogen ions are translocated across the cytoplasmic membrane), and thus conserves the redox energy in a proton gradient. This subunit may bind ubiquinone. In Cytophaga hutchinsonii (strain ATCC 33406 / DSM 1761 / CIP 103989 / NBRC 15051 / NCIMB 9469 / D465), this protein is NADH-quinone oxidoreductase subunit H 2.